A 527-amino-acid chain; its full sequence is UDP-glucuronosyltransferase 2A3 (527 aa).

An N-terminal signal peptide occupies residues 1–23 (MRSDKSALVFLLLQLFCVGCGFC). At 24-491 (GKVLVWPCDM…TWFQHYSIDV (468 aa)) the chain is on the extracellular side. A glycan (N-linked (GlcNAc...) asparagine) is linked at Asn-313. A helical membrane pass occupies residues 492–512 (IGFLLACVATAIFLFTKCFLF). Over 513-527 (SCQKFNKTRKIEKRE) the chain is Cytoplasmic.

This sequence belongs to the UDP-glycosyltransferase family.

It is found in the membrane. The enzyme catalyses glucuronate acceptor + UDP-alpha-D-glucuronate = acceptor beta-D-glucuronoside + UDP + H(+). UDP-glucuronosyltransferases catalyze phase II biotransformation reactions in which lipophilic substrates are conjugated with glucuronic acid to increase water solubility and enhance excretion. They are of major importance in the conjugation and subsequent elimination of potentially toxic xenobiotics and endogenous compounds. The protein is UDP-glucuronosyltransferase 2A3 (UGT2A3) of Homo sapiens (Human).